The sequence spans 335 residues: MLLIGVAGTTLSAQEVDWLQDDAVAGVVLFKRNFASRAQIVELSAALREATPRPLLLAVDQEGGRVQRFHEGYSALPPLQGVGALYARDPEAALELAFEHAWLMASEVRASGVDLSFAPVIDLGRGNRAIGNRAFSDDPHVVAAFARAYVQGMHAAGMPVTLKHFPGHGSVLEDTHVDLAVDVRPLETLECEDLVPFAAGIAAGADAVMMAHVVYPNVAPEPAGFSAHWIEVILRGRMGFRGVVFSDDIGMAAVRGVGSVAGCVHAHLDAGCDVVLVCHPELVNDALSAVAGRRSNTAALIGLIGRGALGWDGLLADVRYGSIQSRLLERFGTST.

Residues aspartate 60, arginine 68, arginine 133, and 163–164 each bind substrate; that span reads KH. Catalysis depends on histidine 176, which acts as the Proton donor/acceptor. The active-site Nucleophile is the aspartate 247.

The protein belongs to the glycosyl hydrolase 3 family. NagZ subfamily. Monomer.

It is found in the cytoplasm. The enzyme catalyses Hydrolysis of terminal non-reducing N-acetyl-D-hexosamine residues in N-acetyl-beta-D-hexosaminides.. The protein operates within cell wall biogenesis; peptidoglycan recycling. Plays a role in peptidoglycan recycling by cleaving the terminal beta-1,4-linked N-acetylglucosamine (GlcNAc) from peptide-linked peptidoglycan fragments, giving rise to free GlcNAc, anhydro-N-acetylmuramic acid and anhydro-N-acetylmuramic acid-linked peptides. The polypeptide is Beta-hexosaminidase (Xylella fastidiosa (strain 9a5c)).